A 307-amino-acid polypeptide reads, in one-letter code: Alpha N-terminal protein methyltransferase 1 (307 aa).

Residues 38-54 (EPAPAPAAGSNGVAGEQ) show a composition bias toward low complexity. Positions 38–60 (EPAPAPAAGSNGVAGEQEAGGGG) are disordered. Residues Gly-123, Arg-128, 145–147 (EPV), 179–180 (LQ), and Gln-195 contribute to the S-adenosyl-L-methionine site.

It belongs to the methyltransferase superfamily. NTM1 family.

It catalyses the reaction N-terminal L-alanyl-L-prolyl-L-lysyl-[protein] + 3 S-adenosyl-L-methionine = N-terminal N,N,N-trimethyl-L-alanyl-L-prolyl-L-lysyl-[protein] + 3 S-adenosyl-L-homocysteine + 3 H(+). The catalysed reaction is N-terminal L-seryl-L-prolyl-L-lysyl-[protein] + 3 S-adenosyl-L-methionine = N-terminal N,N,N-trimethyl-L-seryl-L-prolyl-L-lysyl-[protein] + 3 S-adenosyl-L-homocysteine + 3 H(+). The enzyme catalyses N-terminal L-prolyl-L-prolyl-L-lysyl-[protein] + 2 S-adenosyl-L-methionine = N-terminal N,N-dimethyl-L-prolyl-L-prolyl-L-lysyl-[protein] + 2 S-adenosyl-L-homocysteine + 2 H(+). Functionally, alpha-N-methyltransferase that methylates the N-terminus of target proteins containing the N-terminal motif [Ala/Pro/Ser]-Pro-Lys when the initiator Met is cleaved. Specifically catalyzes mono-, di- or tri-methylation of exposed alpha-amino group of Ala or Ser residue in the [Ala/Ser]-Pro-Lys motif and mono- or di-methylation of Pro in the Pro-Pro-Lys motif. In Oryza sativa subsp. indica (Rice), this protein is Alpha N-terminal protein methyltransferase 1.